The chain runs to 130 residues: Small ribosomal subunit protein uS8 (130 aa).

This sequence belongs to the universal ribosomal protein uS8 family. In terms of assembly, part of the 30S ribosomal subunit. Contacts proteins S5 and S12.

Functionally, one of the primary rRNA binding proteins, it binds directly to 16S rRNA central domain where it helps coordinate assembly of the platform of the 30S subunit. This is Small ribosomal subunit protein uS8 from Salmonella arizonae (strain ATCC BAA-731 / CDC346-86 / RSK2980).